A 106-amino-acid polypeptide reads, in one-letter code: Thioredoxin-like protein YdbP (106 aa).

The 106-residue stretch at 1-106 folds into the Thioredoxin domain; that stretch reads MKKITTNEQF…VTEFLSEHIS (106 aa). A disulfide bond links cysteine 29 and cysteine 32.

It belongs to the thioredoxin family.

Functionally, participates in various redox reactions through the reversible oxidation of its active center dithiol to a disulfide and catalyzes dithiol-disulfide exchange reactions. In Bacillus subtilis (strain 168), this protein is Thioredoxin-like protein YdbP (ydbP).